The primary structure comprises 876 residues: GRB2-associated and regulator of MAPK protein (876 aa).

The interval 12–320 (KDVKWSPVAM…HQVKGDMWPE (309 aa)) is CABIT. Phosphotyrosine is present on Y105. The interval 427-448 (GDSGSDYLFPEANEESAGIPGK) is disordered. Position 453 is a phosphotyrosine (Y453). Disordered regions lie at residues 460–501 (EGKP…ATLG) and 530–572 (LNAP…SYYS). A necessary for interaction with GRB2 region spans residues 498-550 (ATLGATIKSSEIALPPPPVPPKSEAVREECRLLNAPPVPPRSAKPLSTSPSIP). Residues 560-572 (QTRSPSPTLSYYS) are compositionally biased toward polar residues. S609 and S613 each carry phosphoserine. 2 stretches are compositionally biased toward polar residues: residues 630-639 (SGASENQTRS) and 647-657 (RSYSYPRQKTP). Disordered regions lie at residues 630–664 (SGASENQTRSDFLLDPSRSYSYPRQKTPGTPKRTC) and 722–759 (CPALPPRAPKPVEQKATPETSPLPLKIDGAEEDPTAGS). The SAM domain maps to 811–876 (LSIEEVSKSL…QFINGWRPKI (66 aa)).

This sequence belongs to the GAREM family. Interacts with EGFR. Interacts (via proline-rich domain and phosphorylated at Tyr-105 and Tyr-453) with GRB2 (via SH3 domains); the interaction occurs upon EGF stimulation. Interacts (phosphorylated at Tyr-453) with PTPN11; the interaction increases MAPK/ERK activity and does not affect the GRB2/SOS complex formation. Post-translationally, on EGF stimulation, phosphorylated on Tyr-105 and Tyr-453.

Its function is as follows. Acts as an adapter protein that plays a role in intracellular signaling cascades triggered either by the cell surface activated epidermal growth factor receptor and/or cytoplasmic protein tyrosine kinases. Promotes activation of the MAPK/ERK signaling pathway. Plays a role in the regulation of cell proliferation. This chain is GRB2-associated and regulator of MAPK protein (Garem1), found in Mus musculus (Mouse).